Consider the following 314-residue polypeptide: Beta-lactamase 2 (314 aa).

Positions 1–26 are cleaved as a signal peptide; it reads MLHTRIRRATLGAVAALSLVPVMACG. The span at 32 to 47 shows a compositional bias: low complexity; it reads DAAEPAGSAPSSSAAA. The disordered stretch occupies residues 32 to 51; that stretch reads DAAEPAGSAPSSSAAAHKPG. The active-site Acyl-ester intermediate is the Ser-96. 258–260 is a binding site for substrate; sequence KTG.

The protein belongs to the class-A beta-lactamase family.

The catalysed reaction is a beta-lactam + H2O = a substituted beta-amino acid. This Streptomyces cacaoi protein is Beta-lactamase 2 (blaU).